The sequence spans 172 residues: S-ribosylhomocysteine lyase (172 aa).

Positions 54, 58, and 128 each coordinate Fe cation.

This sequence belongs to the LuxS family. As to quaternary structure, homodimer. Requires Fe cation as cofactor.

The catalysed reaction is S-(5-deoxy-D-ribos-5-yl)-L-homocysteine = (S)-4,5-dihydroxypentane-2,3-dione + L-homocysteine. Functionally, involved in the synthesis of autoinducer 2 (AI-2) which is secreted by bacteria and is used to communicate both the cell density and the metabolic potential of the environment. The regulation of gene expression in response to changes in cell density is called quorum sensing. Catalyzes the transformation of S-ribosylhomocysteine (RHC) to homocysteine (HC) and 4,5-dihydroxy-2,3-pentadione (DPD). The protein is S-ribosylhomocysteine lyase of Photobacterium profundum (strain SS9).